The sequence spans 352 residues: Holliday junction branch migration complex subunit RuvB (352 aa).

The large ATPase domain (RuvB-L) stretch occupies residues 13 to 201 (LPLRKKELRL…FGISQKIEFY (189 aa)). Residues Arg-41, Gly-82, Lys-85, Thr-86, Thr-87, 148–150 (EDF), Arg-191, Tyr-201, and Arg-238 contribute to the ATP site. Thr-86 lines the Mg(2+) pocket. A small ATPAse domain (RuvB-S) region spans residues 202–273 (NYDELKQILL…LIKKALNSYQ (72 aa)). Residues 276–352 (DKGLDSLDRH…KYIDSKNDDF (77 aa)) are head domain (RuvB-H). DNA is bound by residues Arg-330 and Arg-335.

Belongs to the RuvB family. In terms of assembly, homohexamer. Forms an RuvA(8)-RuvB(12)-Holliday junction (HJ) complex. HJ DNA is sandwiched between 2 RuvA tetramers; dsDNA enters through RuvA and exits via RuvB. An RuvB hexamer assembles on each DNA strand where it exits the tetramer. Each RuvB hexamer is contacted by two RuvA subunits (via domain III) on 2 adjacent RuvB subunits; this complex drives branch migration. In the full resolvosome a probable DNA-RuvA(4)-RuvB(12)-RuvC(2) complex forms which resolves the HJ.

The protein resides in the cytoplasm. It carries out the reaction ATP + H2O = ADP + phosphate + H(+). In terms of biological role, the RuvA-RuvB-RuvC complex processes Holliday junction (HJ) DNA during genetic recombination and DNA repair, while the RuvA-RuvB complex plays an important role in the rescue of blocked DNA replication forks via replication fork reversal (RFR). RuvA specifically binds to HJ cruciform DNA, conferring on it an open structure. The RuvB hexamer acts as an ATP-dependent pump, pulling dsDNA into and through the RuvAB complex. RuvB forms 2 homohexamers on either side of HJ DNA bound by 1 or 2 RuvA tetramers; 4 subunits per hexamer contact DNA at a time. Coordinated motions by a converter formed by DNA-disengaged RuvB subunits stimulates ATP hydrolysis and nucleotide exchange. Immobilization of the converter enables RuvB to convert the ATP-contained energy into a lever motion, pulling 2 nucleotides of DNA out of the RuvA tetramer per ATP hydrolyzed, thus driving DNA branch migration. The RuvB motors rotate together with the DNA substrate, which together with the progressing nucleotide cycle form the mechanistic basis for DNA recombination by continuous HJ branch migration. Branch migration allows RuvC to scan DNA until it finds its consensus sequence, where it cleaves and resolves cruciform DNA. This is Holliday junction branch migration complex subunit RuvB from Prochlorococcus marinus (strain MIT 9301).